A 199-amino-acid chain; its full sequence is Cutinase CUT1 (199 aa).

The signal sequence occupies residues 1-18 (MKFTTLATLALGAVSALA). The propeptide occupies 19-27 (APVTELESR). Q28 is modified (pyrrolidone carboxylic acid). C31 and C105 form a disulfide bridge. Catalysis depends on S116, which acts as the Nucleophile. A disulfide bridge connects residues C164 and C171. D168 is an active-site residue. Residue H181 is the Proton donor/acceptor of the active site.

The protein belongs to the cutinase family. In terms of processing, the 2 disulfide bonds play a critical role in holding the catalytic residues in juxta-position; reduction of the disulfide bridges results in the complete inactivation of the enzyme.

The catalysed reaction is cutin + H2O = cutin monomers.. Functionally, catalyzes the hydrolysis of complex carboxylic polyesters found in the cell wall of plants. Degrades cutin, a macromolecule that forms the structure of the plant cuticle. Also degrades suberin, a specialized macromolecule found in the cell wall of various plant tissues. This chain is Cutinase CUT1, found in Coprinopsis cinerea (Inky cap fungus).